A 216-amino-acid polypeptide reads, in one-letter code: Probable GTP-binding protein EngB (216 aa).

The EngB-type G domain maps to 37-214 (AGLEVAFAGR…RAAMIKLIAE (178 aa)). Residues 45 to 52 (GRSNVGKS), 72 to 76 (GRTQE), 92 to 95 (DMPG), 159 to 162 (TKAD), and 193 to 195 (TSS) contribute to the GTP site. Positions 52 and 74 each coordinate Mg(2+).

Belongs to the TRAFAC class TrmE-Era-EngA-EngB-Septin-like GTPase superfamily. EngB GTPase family. It depends on Mg(2+) as a cofactor.

Its function is as follows. Necessary for normal cell division and for the maintenance of normal septation. The polypeptide is Probable GTP-binding protein EngB (Rhodopseudomonas palustris (strain BisB18)).